The following is a 489-amino-acid chain: MIKLFNTLSKRIEVFKPIDDVVKIYCCGVTVYDLCHLGHARSYIAWDVLRRFLIYSDFKVKYVQNFTDIDDKILKRAKEESISMKEVSEKNIIEFHKDMDSLGIMRPDSMPRATNHICNICDLITILEDKGYAYSRDGDVYYSVFKNQNYGKLSNQNIEEQNINQQGRMANEENSKKLNPQDFALWKKAKDDEPFFDSPWGKGRPGWHIECSAMVKDELGDTIDIHLGGSDLIFPHHENEIAQSEAANGKKLANYWLHNGMVNVNGQKMSKSLKNFKTIRELINSGISPMTLRYFVMTVNYRKPLDFTEEALRSASEAWKNINVALSFMDLTKGSLNSIDKNEPIEEEYKEKISFELSQKKLKFSEALGNDLNTASAIAIIYDLAKPLKNFLNQFQRVEGFKIDQNEKFFLLENFKTLEKLTEVLGLKKEVLVKESKITEEEISTLINERLKAKKEKNYAKADEIRSLLKEKGIELIDQSKEITTWIRV.

Cys27 contributes to the Zn(2+) binding site. Positions 29–39 (VTVYDLCHLGH) match the 'HIGH' region motif. Cys211, His236, and Glu240 together coordinate Zn(2+). A 'KMSKS' region motif is present at residues 268–272 (KMSKS). Lys271 is a binding site for ATP.

Belongs to the class-I aminoacyl-tRNA synthetase family. Monomer. Requires Zn(2+) as cofactor.

The protein resides in the cytoplasm. It carries out the reaction tRNA(Cys) + L-cysteine + ATP = L-cysteinyl-tRNA(Cys) + AMP + diphosphate. The polypeptide is Cysteine--tRNA ligase (Prochlorococcus marinus (strain MIT 9301)).